We begin with the raw amino-acid sequence, 2640 residues long: Collagen alpha-5(VI) chain (2640 aa).

The signal sequence occupies residues 1–18 (MKLRLIAFVLILWTETLA). The tract at residues 19–1426 (DQSPGPGPEY…ACCCTFCKCP (1408 aa)) is nonhelical region. VWFA domains are found at residues 30 to 209 (DVVF…IKDV), 268 to 445 (DLIF…LKKI), 474 to 644 (DIYF…KNEI), 660 to 829 (DIMF…ESKL), 846 to 1023 (DIVF…QETL), 1037 to 1214 (DVIF…VREI), and 1226 to 1413 (DVVV…LGNI). N201, N292, and N614 each carry an N-linked (GlcNAc...) asparagine glycan. Collagen-like domains follow at residues 1426–1478 (PGIP…GCPG), 1474–1524 (VGCP…DPGN), 1557–1614 (GQKG…GPEG), 1632–1689 (GSQG…GIPG), and 1706–1762 (GDPG…AGQP). The interval 1427–1760 (GIPGPHGTRG…GRRGPKGTAG (334 aa)) is triple-helical region. The segment at 1435–1761 (RGLQASKGSS…RRGPKGTAGQ (327 aa)) is disordered. The segment covering 1452–1464 (HRGEDGDPGRRGE) has biased composition (basic and acidic residues). The segment covering 1537 to 1567 (DGEKGFPGDPGDPGKDSNIKGQKGEKGERGR) has biased composition (basic and acidic residues). Polar residues predominate over residues 1597-1609 (PSGQAGNPGPQGT). Residues 1610–1622 (QGPEGLQGSQGSS) show a composition bias toward low complexity. The short motif at 1649 to 1651 (RGD) is the Cell attachment site element. Residues 1718 to 1727 (GIPGGPGPKG) are compositionally biased toward gly residues. A compositionally biased stretch (low complexity) spans 1740-1750 (RSGLQGSQGPP). The tract at residues 1761 to 2640 (QPIYSPCELI…NSKQDGEDAR (880 aa)) is nonhelical region. VWFA domains are found at residues 1790 to 1970 (ELVF…KLRR) and 1996 to 2186 (DVAF…VKFL). Short sequence motifs (cell attachment site) lie at residues 2216–2218 (RGD) and 2259–2261 (RGD). A VWFA 10 domain is found at 2321–2516 (DVAFLIDASQ…PDLDYVIKFI (196 aa)). N2541 carries an N-linked (GlcNAc...) asparagine glycan. A disordered region spans residues 2617 to 2640 (DKEEPCSAETPAPVNSKQDGEDAR).

It belongs to the type VI collagen family. As to quaternary structure, trimers composed of three different chains: alpha-1(VI), alpha-2(VI), and alpha-3(VI) or alpha-4(VI) or alpha-5(VI) or alpha-6(VI). In terms of processing, prolines at the third position of the tripeptide repeating unit (G-X-Y) are hydroxylated in some or all of the chains. In newborn, it is expressed in lung, heart, kidney, muscle, brain, intestine, skin, femur, sternum and calvaria. In adult, it is widely expressed and is detected in lung, heart, kidney, spleen, muscle, ovary, uterus, brain, skin, liver and sternum.

It is found in the secreted. Its subcellular location is the extracellular space. It localises to the extracellular matrix. Collagen VI acts as a cell-binding protein. This Mus musculus (Mouse) protein is Collagen alpha-5(VI) chain (Col6a5).